Reading from the N-terminus, the 474-residue chain is MYIKMATLANGQADNASLSTNGLGSSPGSAGHMNGLSHSPGNPSTIPMKDHDAIKLFIGQIPRNLDEKDLKPLFEEFGKIYELTVLKDRFTGMHKGCAFLTYCERESALKAQSALHEQKTLPGMNRPIQVKPADSESRGDRKLFVGMLNKQQSEDDVRRLFEAFGNIEECTILRGPDGNSKGCAFVKYSSHAEAQAAINALHGSQTMPGASSSLVVKFADTDKERTMRRMQQMAGQMGMFNPMAIPFGAYGAYAQALMQQQAALMASVAQGGYLNPMAAFAAAQMQQMAALNMNGLAAAPMTPTSGGSTPPGITAPAVPSIPSPIGVNGFTGLPPQANGQPAAEAVFANGIHPYPAQSPTAADPLQQAYAGVQQYAGPAYPAAYGQISQAFPQPPPMIPQQQREGPEGCNLFIYHLPQEFGDAELMQMFLPFGFVSFDNPASAQTAIQAMNGFQIGMKRLKVQLKRPKDANRPY.

A sufficient for RNA-binding and MSE-dependent splicing activity region spans residues 1-287; that stretch reads MYIKMATLAN…AAFAAAQMQQ (287 aa). Polar residues predominate over residues 18 to 28; sequence LSTNGLGSSPG. A disordered region spans residues 18-41; the sequence is LSTNGLGSSPGSAGHMNGLSHSPG. RRM domains are found at residues 54–135 and 141–221; these read IKLF…PADS and RKLF…FADT. Residues 228 to 247 are necessary for TNNT2 exon 5 inclusion; that stretch reads RRMQQMAGQMGMFNPMAIPF. In terms of domain architecture, RRM 3 spans 392–467; that stretch reads PQPPPMIPQQ…KRLKVQLKRP (76 aa).

It belongs to the CELF/BRUNOL family.

Its subcellular location is the nucleus. The protein resides in the cytoplasm. RNA-binding protein implicated in the regulation of pre-mRNA alternative splicing. Mediates exon inclusion and/or exclusion in pre-mRNA that are subject to tissue-specific and developmentally regulated alternative splicing. Specifically activates exon 5 inclusion of cardiac isoforms of TNNT2 during heart remodeling at the juvenile to adult transition. Promotes exclusion of both the smooth muscle (SM) and non-muscle (NM) exons in actinin pre-mRNAs. Activates the splicing of MAPT/Tau exon 10. Binds to muscle-specific splicing enhancer (MSE) intronic sites flanking the alternative exon 5 of TNNT2 pre-mRNA. This Macaca fascicularis (Crab-eating macaque) protein is CUGBP Elav-like family member 4 (CELF4).